A 498-amino-acid polypeptide reads, in one-letter code: Glycerol kinase (498 aa).

Thr12 serves as a coordination point for ADP. Residues Thr12, Thr13, and Ser14 each coordinate ATP. Thr12 contributes to the sn-glycerol 3-phosphate binding site. Arg16 lines the ADP pocket. Sn-glycerol 3-phosphate-binding residues include Arg82, Glu83, Tyr134, and Asp243. Residues Arg82, Glu83, Tyr134, Asp243, and Gln244 each coordinate glycerol. The ADP site is built by Thr265 and Gly308. Thr265, Gly308, Gln312, and Gly411 together coordinate ATP. Residue Gly411 coordinates ADP.

Belongs to the FGGY kinase family.

The enzyme catalyses glycerol + ATP = sn-glycerol 3-phosphate + ADP + H(+). It functions in the pathway polyol metabolism; glycerol degradation via glycerol kinase pathway; sn-glycerol 3-phosphate from glycerol: step 1/1. Inhibited by fructose 1,6-bisphosphate (FBP). Key enzyme in the regulation of glycerol uptake and metabolism. Catalyzes the phosphorylation of glycerol to yield sn-glycerol 3-phosphate. The polypeptide is Glycerol kinase (Brucella canis (strain ATCC 23365 / NCTC 10854 / RM-666)).